The chain runs to 738 residues: Ethylene receptor (738 aa).

The next 3 membrane-spanning stretches (helical) occupy residues 23–43 (ISDF…IYFV), 54–74 (VLVQ…INLW), and 89–109 (IAKV…VHII). 2 residues coordinate Cu cation: Cys-65 and His-69. The 150-residue stretch at 158–307 (DRHTILRTTL…VVADQVAVAL (150 aa)) folds into the GAF domain. Residues 350 to 589 (VMNHEMRTPM…IFIVKLGIPE (240 aa)) form the Histidine kinase domain. Residue His-353 is modified to Phosphohistidine; by autocatalysis. The Response regulatory domain maps to 615 to 730 (KVLLMDDNGV…KMRSVLSDLL (116 aa)). Residue Asp-663 is modified to 4-aspartylphosphate.

It belongs to the ethylene receptor family. As to quaternary structure, homodimer; disulfide-linked. The cofactor is Cu cation. Post-translationally, activation probably requires a transfer of a phosphate group between a His in the transmitter domain and an Asp of the receiver domain. Higher expression in arils than in seeds.

The protein resides in the endoplasmic reticulum membrane. It carries out the reaction ATP + protein L-histidine = ADP + protein N-phospho-L-histidine.. May act early in the ethylene signal transduction pathway, possibly as an ethylene receptor, or as a regulator of the pathway. The protein is Ethylene receptor (ETR1) of Passiflora edulis (Passion fruit).